The primary structure comprises 327 residues: Olfactory receptor 6A2 (327 aa).

The Extracellular segment spans residues 1–26 (MEWRNHSGRVSEFVLLGFPAPAPLQV). A glycan (N-linked (GlcNAc...) asparagine) is linked at N5. The chain crosses the membrane as a helical span at residues 27 to 47 (LLFALLLLAYVLVLTENTLII). The Cytoplasmic portion of the chain corresponds to 48-55 (MAIRNHST). A helical membrane pass occupies residues 56 to 76 (LHKPMYFFLANMSFLEIWYVT). Residues 77-104 (VTIPKMLAGFVGSKQDHGQLISFEGCMT) are Extracellular-facing. A disulfide bridge connects residues C102 and C194. Residues 105–125 (QLYFFLGLGCTECVLLAVMAY) traverse the membrane as a helical segment. Residues 126–144 (DRYMAICYPLHYPVIVSGR) are Cytoplasmic-facing. The chain crosses the membrane as a helical span at residues 145–165 (LCVQMAAGSWAGGFGISMVKV). The Extracellular segment spans residues 166 to 201 (FLISGLSYCGPNIINHFFCDVSPLLNLSCTDMSTAE). An N-linked (GlcNAc...) asparagine glycan is attached at N191. Residues 202–222 (LTDFILAIFILLGPLSVTGAS) form a helical membrane-spanning segment. Residues 223–242 (YVAITGAVMHIPSAAGRYKA) are Cytoplasmic-facing. Residues 243–263 (FSTCASHLTVVIIFYAASIFI) form a helical membrane-spanning segment. The Extracellular segment spans residues 264–276 (YARPKALSAFDTN). A helical transmembrane segment spans residues 277–297 (KLVSVLYAVIVPLLNPIIYCL). Over 298 to 327 (RNQEVKRALCCTLHLYQHQDPDPKKASRNV) the chain is Cytoplasmic.

The protein belongs to the G-protein coupled receptor 1 family.

The protein resides in the cell membrane. In terms of biological role, odorant receptor. The chain is Olfactory receptor 6A2 (OR6A2) from Homo sapiens (Human).